The chain runs to 243 residues: 7-cyano-7-deazaguanine synthase (243 aa).

18 to 28 lines the ATP pocket; sequence FSGGQDSATCL. The Zn(2+) site is built by C206, C221, C224, and C227.

The protein belongs to the QueC family. Requires Zn(2+) as cofactor.

The enzyme catalyses 7-carboxy-7-deazaguanine + NH4(+) + ATP = 7-cyano-7-deazaguanine + ADP + phosphate + H2O + H(+). The protein operates within purine metabolism; 7-cyano-7-deazaguanine biosynthesis. Its function is as follows. Catalyzes the ATP-dependent conversion of 7-carboxy-7-deazaguanine (CDG) to 7-cyano-7-deazaguanine (preQ(0)). The polypeptide is 7-cyano-7-deazaguanine synthase (Methylorubrum extorquens (strain PA1) (Methylobacterium extorquens)).